The sequence spans 679 residues: Protein hook (679 aa).

The region spanning 6 to 123 is the Calponin-homology (CH) domain; sequence NEMYYSLLEW…RLLQLVLGCA (118 aa). Coiled-coil stretches lie at residues 135 to 437 and 480 to 574; these read EIMC…LKCG and QTAL…QEIL.

Belongs to the hook family. As to quaternary structure, homodimer. Interacts with microtubules via its N-terminus.

It localises to the cytoplasm. The protein resides in the cytoskeleton. The protein localises to the endosome. Its subcellular location is the synapse. In terms of biological role, involved in endocytic trafficking by stabilizing organelles of the endocytic pathway. Probably acts as a cytoskeletal linker protein required to tether endosome vesicles to the cytoskeleton. Involved in modulation of endocytosis at stages required for down-regulation of membrane proteins that control synapse size. Not involved in synaptic vesicle recycling. Required in R7 cells for boss endocytosis into multivesicular bodies (MVBs). Has a role in regulating adult longevity. The chain is Protein hook from Drosophila erecta (Fruit fly).